Consider the following 158-residue polypeptide: HVA22-like protein f (158 aa).

3 helical membrane-spanning segments follow: residues 2–22 (GFII…VMLL), 41–61 (QQWL…LSVW), and 63–83 (VLAW…WLVL).

The protein belongs to the DP1 family.

The protein localises to the membrane. This chain is HVA22-like protein f (HVA22F), found in Arabidopsis thaliana (Mouse-ear cress).